The primary structure comprises 423 residues: tRNA(Ile)-lysidine synthase (423 aa).

27-32 serves as a coordination point for ATP; sequence SGGVDS.

It belongs to the tRNA(Ile)-lysidine synthase family.

The protein resides in the cytoplasm. The catalysed reaction is cytidine(34) in tRNA(Ile2) + L-lysine + ATP = lysidine(34) in tRNA(Ile2) + AMP + diphosphate + H(+). Ligates lysine onto the cytidine present at position 34 of the AUA codon-specific tRNA(Ile) that contains the anticodon CAU, in an ATP-dependent manner. Cytidine is converted to lysidine, thus changing the amino acid specificity of the tRNA from methionine to isoleucine. This is tRNA(Ile)-lysidine synthase from Streptococcus mutans serotype c (strain ATCC 700610 / UA159).